Consider the following 142-residue polypeptide: SPbeta prophage-derived deoxyuridine 5'-triphosphate nucleotidohydrolase YosS (142 aa).

DUMP is bound by residues S62 and N74. D80 functions as the Proton acceptor in the catalytic mechanism. Residues Y83 and F91 each coordinate dUMP.

Belongs to the dUTPase family. Homotrimer. Requires Mg(2+) as cofactor.

It carries out the reaction dUTP + H2O = dUMP + diphosphate + H(+). It functions in the pathway pyrimidine metabolism; dUMP biosynthesis; dUMP from dCTP (dUTP route): step 2/2. Involved in nucleotide metabolism: produces dUMP, the immediate precursor of thymidine nucleotides and decreases the intracellular concentration of dUTP, so that uracil cannot be incorporated into DNA. The Ser-62 side chain changes its position upon ligand-binding to make contacts with the nucleotide phosphates. This is SPbeta prophage-derived deoxyuridine 5'-triphosphate nucleotidohydrolase YosS from Bacillus subtilis (strain 168).